Reading from the N-terminus, the 225-residue chain is Peroxiredoxin-2E-2, chloroplastic (225 aa).

The N-terminal 42 residues, 1–42 (MAAPTAAALSTLSTASVTSGKRFITSSFSLSFSSRPLATGVR), are a transit peptide targeting the chloroplast. A Thioredoxin domain is found at 63–225 (IAVGDKLPDA…SSAEEMLKAL (163 aa)). Cys111 functions as the Cysteine sulfenic acid (-SOH) intermediate in the catalytic mechanism.

It belongs to the peroxiredoxin family. Prx5 subfamily. As to quaternary structure, monomer.

The protein localises to the plastid. Its subcellular location is the chloroplast stroma. It catalyses the reaction [glutaredoxin]-dithiol + a hydroperoxide = [glutaredoxin]-disulfide + an alcohol + H2O. Functionally, thiol-specific peroxidase that catalyzes the reduction of hydrogen peroxide and organic hydroperoxides to water and alcohols, respectively. Plays a role in cell protection against oxidative stress by detoxifying peroxides. May be involved in chloroplast redox homeostasis. The chain is Peroxiredoxin-2E-2, chloroplastic (PRXIIE-2) from Oryza sativa subsp. japonica (Rice).